Consider the following 86-residue polypeptide: MELKHSISDYTEAEFLQLVTTICNADTSSEEELVKLVTHFEEMTEHPSGSDLIYYPKEGDDDSPSGIVNTVKQWRAANGKSGFKQG.

Belongs to the colicins ColE2/ColE8/ColE9 and pyocins S1/S2 family.

Its function is as follows. This protein is able to protect a cell, which harbors the plasmid ColE9 encoding colicin E9, against colicin E9, it binds specifically to the DNase-type colicin and inhibits its bactericidal activity. This chain is Colicin-E9 immunity protein (imm), found in Escherichia coli.